Here is a 37-residue protein sequence, read N- to C-terminus: Bactericidin B-2 (37 aa).

Glycine amide is present on glycine 37.

The protein belongs to the cecropin family.

The protein resides in the secreted. Cecropins have lytic and antibacterial activity against several Gram-positive and Gram-negative bacteria. The sequence is that of Bactericidin B-2 from Manduca sexta (Tobacco hawkmoth).